The sequence spans 147 residues: Hemoglobin subunit beta (147 aa).

In terms of domain architecture, Globin spans 3–147; sequence HWTAEEKQLI…VAHALARKYH (145 aa). The heme b site is built by H64 and H93.

It belongs to the globin family. As to quaternary structure, heterotetramer of two alpha chains and two beta chains. As to expression, red blood cells.

Functionally, involved in oxygen transport from the lung to the various peripheral tissues. The sequence is that of Hemoglobin subunit beta (HBB) from Anas platyrhynchos (Mallard).